The sequence spans 289 residues: N-acetylmuramoyl-L-alanine amidase AmiA (289 aa).

Residues Met1–Ala34 constitute a signal peptide (tat-type signal). A disordered region spans residues Glu36–Leu61. Residues Ser46–Ser55 are compositionally biased toward basic residues. The 215-residue stretch at Val59–Ile273 folds into the MurNAc-LAA domain.

It belongs to the N-acetylmuramoyl-L-alanine amidase 3 family. Post-translationally, predicted to be exported by the Tat system. The position of the signal peptide cleavage has not been experimentally proven.

It localises to the periplasm. It catalyses the reaction Hydrolyzes the link between N-acetylmuramoyl residues and L-amino acid residues in certain cell-wall glycopeptides.. Cell-wall hydrolase involved in septum cleavage during cell division. In Salmonella typhimurium (strain LT2 / SGSC1412 / ATCC 700720), this protein is N-acetylmuramoyl-L-alanine amidase AmiA (amiA).